A 110-amino-acid chain; its full sequence is IQ domain-containing protein J (110 aa).

The region spanning 47 to 67 (ESKVKIIQRAWREYLQRQDPL) is the IQ domain. The disordered stretch occupies residues 63–99 (RQDPLEKRSPSPPSVSSDKLSSSVSMNTFSDSSTPVS). The span at 76–87 (SVSSDKLSSSVS) shows a compositional bias: low complexity. The segment covering 88–99 (MNTFSDSSTPVS) has biased composition (polar residues).

The protein is IQ domain-containing protein J of Mus musculus (Mouse).